The sequence spans 261 residues: Hemin import ATP-binding protein HmuV (261 aa).

An ABC transporter domain is found at 3–239; sequence LDAADITVKL…AILSQAYGCA (237 aa). 35–42 serves as a coordination point for ATP; that stretch reads GPNGSGKT.

Belongs to the ABC transporter superfamily. Heme (hemin) importer (TC 3.A.1.14.5) family. The complex is composed of two ATP-binding proteins (HmuV), two transmembrane proteins (HmuU) and a solute-binding protein (HmuT).

It localises to the cell inner membrane. Its function is as follows. Part of the ABC transporter complex HmuTUV involved in hemin import. Responsible for energy coupling to the transport system. This chain is Hemin import ATP-binding protein HmuV, found in Roseobacter denitrificans (strain ATCC 33942 / OCh 114) (Erythrobacter sp. (strain OCh 114)).